The primary structure comprises 355 residues: MGFGLESIKSISGGWGAAARSCDACKSVTAAVFCRVDSAFLCIACDTRIHSFTRHERVWVCEVCEQAPAAVTCKADAAALCVSCDADIHSANPLASRHERVPVETFFDSAETAVAKISASSTFGILGSSTTVDLTAVPVMADDLGLCPWLLPNDFNEPAKIEIGTENMKGSSDFMFSDFDRLIDFEFPNSFNHHQNNAGGDSLVPVQTKTEPLPLTNNDHCFDIDFCRSKLSAFTYPSQSVSHSVSTSSIEYGVVPDGNTNNSVNRSTITSSTTGGDHQASSMDREARVLRYREKRKNRKFEKTIRYASRKAYAESRPRIKGRFAKRTETENDDIFLSHVYASAAHAQYGVVPTF.

Zn(2+) is bound by residues C22, C25, C45, H50, C61, C64, C84, and H89. Residues 22-60 form a B box-type 1; atypical zinc finger; sequence CDACKSVTAAVFCRVDSAFLCIACDTRIHSFTRHERVWV. Residues 61–103 form a B box-type 2; atypical zinc finger; that stretch reads CEVCEQAPAAVTCKADAAALCVSCDADIHSANPLASRHERVPV. The CCT domain maps to 285 to 327; sequence REARVLRYREKRKNRKFEKTIRYASRKAYAESRPRIKGRFAKR.

This sequence belongs to the CONSTANS family.

The protein localises to the nucleus. This Arabidopsis thaliana (Mouse-ear cress) protein is Zinc finger protein CONSTANS-LIKE 5 (COL5).